The primary structure comprises 98 residues: Hainantoxin-XVII-2 (98 aa).

The N-terminal stretch at 1–40 (MTTVGVSLFRRSPEKITMKIATFLGLSFLLIASYVLICEA) is a signal peptide. The propeptide occupies 41–64 (QHPGFQELLILEENMRDPENSKER). 2 disulfides stabilise this stretch: Cys66/Cys81 and Cys73/Cys85.

The protein belongs to the hainantoxin family. 17 subfamily. As to expression, expressed by the venom gland.

The protein localises to the secreted. Functionally, putative ion channel inhibitor. In Cyriopagopus hainanus (Chinese bird spider), this protein is Hainantoxin-XVII-2.